The chain runs to 127 residues: uncharacterized protein (127 aa).

This is an uncharacterized protein from Homo sapiens (Human).